The primary structure comprises 262 residues: tRNA pseudouridine synthase A (262 aa).

Catalysis depends on Asp-52, which acts as the Nucleophile. Residue Tyr-110 coordinates substrate.

The protein belongs to the tRNA pseudouridine synthase TruA family. In terms of assembly, homodimer.

The catalysed reaction is uridine(38/39/40) in tRNA = pseudouridine(38/39/40) in tRNA. In terms of biological role, formation of pseudouridine at positions 38, 39 and 40 in the anticodon stem and loop of transfer RNAs. This chain is tRNA pseudouridine synthase A, found in Chromobacterium violaceum (strain ATCC 12472 / DSM 30191 / JCM 1249 / CCUG 213 / NBRC 12614 / NCIMB 9131 / NCTC 9757 / MK).